The chain runs to 510 residues: Probable cytochrome P450 4d20 (510 aa).

C455 provides a ligand contact to heme.

It belongs to the cytochrome P450 family. Requires heme as cofactor.

Its subcellular location is the endoplasmic reticulum membrane. It is found in the microsome membrane. Functionally, may be involved in the metabolism of insect hormones and in the breakdown of synthetic insecticides. The chain is Probable cytochrome P450 4d20 (Cyp4d20) from Drosophila melanogaster (Fruit fly).